Consider the following 81-residue polypeptide: Cortexin-2 (81 aa).

Residues 29–49 form a helical membrane-spanning segment; that stretch reads TAFAFVGMLLVFLGLLIVRCF.

It belongs to the cortexin family.

Its subcellular location is the membrane. This is Cortexin-2 (ctxn2) from Danio rerio (Zebrafish).